We begin with the raw amino-acid sequence, 204 residues long: Thymidine kinase (204 aa).

ATP-binding positions include 23–30 (GSMFSGKT) and 95–98 (DEAQ). E96 serves as the catalytic Proton acceptor. Zn(2+) contacts are provided by C152, C155, C184, and C187.

It belongs to the thymidine kinase family. Homotetramer.

Its subcellular location is the cytoplasm. The catalysed reaction is thymidine + ATP = dTMP + ADP + H(+). The chain is Thymidine kinase from Porphyromonas gingivalis (strain ATCC BAA-308 / W83).